A 611-amino-acid chain; its full sequence is Leukotriene A-4 hydrolase (611 aa).

K73 is subject to N6-acetyllysine. A peptide contacts are provided by residues 135 to 137 (QCQ) and 267 to 272 (PYGGME). H296 is a Zn(2+) binding site. The Proton acceptor role is filled by E297. Positions 300 and 319 each coordinate Zn(2+). K337 carries the post-translational modification N6-acetyllysine. Y384 serves as the catalytic Proton donor. An N6-acetyllysine modification is found at K414. S416 bears the Phosphoserine mark. Residue 564–566 (RMK) participates in a peptide binding. An N6-acetyllysine modification is found at K573.

It belongs to the peptidase M1 family. In terms of assembly, monomer. It depends on Zn(2+) as a cofactor. Post-translationally, phosphorylation at Ser-416 inhibits leukotriene-A4 hydrolase activity. activity.

Its subcellular location is the cytoplasm. It carries out the reaction leukotriene A4 + H2O = leukotriene B4. It catalyses the reaction (5S,6S)-epoxy-(18R)-hydroxy-(7E,9E,11Z,14Z,16E)-eicosapentaenoate + H2O = resolvin E1. The catalysed reaction is (5S,6S)-epoxy-(18S)-hydroxy-(7E,9E,11Z,14Z,16E)-eicosapentaenoate + H2O = 18S-resolvin E1. The enzyme catalyses Release of the N-terminal residue from a tripeptide.. It participates in lipid metabolism; leukotriene B4 biosynthesis. Inhibited by bestatin. The epoxide hydrolase activity is restrained by suicide inactivation that involves binding of LTA4 to Tyr-379. 4-(4-benzylphenyl)thiazol-2-amine (ARM1) selectively inhibits the epoxide hydrolase activity. In terms of biological role, bifunctional zinc metalloenzyme that comprises both epoxide hydrolase (EH) and aminopeptidase activities. Acts as an epoxide hydrolase to catalyze the conversion of LTA4 to the pro-inflammatory mediator leukotriene B4 (LTB4). Also has aminopeptidase activity, with high affinity for N-terminal arginines of various synthetic tripeptides. In addition to its pro-inflammatory EH activity, may also counteract inflammation by its aminopeptidase activity, which inactivates by cleavage another neutrophil attractant, the tripeptide Pro-Gly-Pro (PGP), a bioactive fragment of collagen generated by the action of matrix metalloproteinase-9 (MMP9) and prolylendopeptidase (PREPL). Involved also in the biosynthesis of resolvin E1 and 18S-resolvin E1 from eicosapentaenoic acid, two lipid mediators that show potent anti-inflammatory and pro-resolving actions. This Bos taurus (Bovine) protein is Leukotriene A-4 hydrolase (LTA4H).